Here is a 340-residue protein sequence, read N- to C-terminus: Deubiquitinase SseL (340 aa).

His223 is a catalytic residue. Residue Cys285 is the Nucleophile of the active site.

This sequence belongs to the peptidase C79 family.

Its subcellular location is the secreted. It is found in the host cytoplasm. Effector proteins function to alter host cell physiology and promote bacterial survival in host tissues. This protease targets the host cell ubiquitin pathway by acting as a deubiquitinase in infected host cells. The protein is Deubiquitinase SseL (sseL) of Salmonella paratyphi A (strain ATCC 9150 / SARB42).